We begin with the raw amino-acid sequence, 440 residues long: Proline--tRNA ligase (440 aa).

Belongs to the class-II aminoacyl-tRNA synthetase family. ProS type 2 subfamily. Homodimer.

It is found in the cytoplasm. The enzyme catalyses tRNA(Pro) + L-proline + ATP = L-prolyl-tRNA(Pro) + AMP + diphosphate. Functionally, catalyzes the attachment of proline to tRNA(Pro) in a two-step reaction: proline is first activated by ATP to form Pro-AMP and then transferred to the acceptor end of tRNA(Pro). This Rhizobium etli (strain ATCC 51251 / DSM 11541 / JCM 21823 / NBRC 15573 / CFN 42) protein is Proline--tRNA ligase.